The primary structure comprises 169 residues: Der GTPase-activating protein YihI (169 aa).

Disordered stretches follow at residues 1-99 and 146-169; these read MKPS…QAEL and SYDD…LRGN. Residues 10–19 are compositionally biased toward basic residues; the sequence is SKGHAKARRK. Residues 20–30 show a composition bias toward basic and acidic residues; it reads TREELDQEARD. Basic residues predominate over residues 31 to 40; it reads RKRQKKRRGH. A compositionally biased stretch (polar residues) spans 49-58; sequence GNTTSGSKGQ. Residues 147 to 159 show a composition bias toward acidic residues; sequence YDDDEEEEEDEKQ. Over residues 160–169 the composition is skewed to basic and acidic residues; sequence EDMMRLLRGN.

Belongs to the YihI family. As to quaternary structure, interacts with Der.

Functionally, a GTPase-activating protein (GAP) that modifies Der/EngA GTPase function. May play a role in ribosome biogenesis. The polypeptide is Der GTPase-activating protein YihI (Escherichia coli O81 (strain ED1a)).